Consider the following 306-residue polypeptide: 3-methyl-2-oxobutanoate hydroxymethyltransferase (306 aa).

Residues Asp53 and Asp96 each contribute to the Mg(2+) site. Residues 53 to 54 (DS), Asp96, and Lys126 contribute to the 3-methyl-2-oxobutanoate site. Glu128 provides a ligand contact to Mg(2+). Catalysis depends on Glu195, which acts as the Proton acceptor.

Belongs to the PanB family. Homodecamer; pentamer of dimers. The cofactor is Mg(2+).

The protein localises to the cytoplasm. It catalyses the reaction 3-methyl-2-oxobutanoate + (6R)-5,10-methylene-5,6,7,8-tetrahydrofolate + H2O = 2-dehydropantoate + (6S)-5,6,7,8-tetrahydrofolate. Its pathway is cofactor biosynthesis; (R)-pantothenate biosynthesis; (R)-pantoate from 3-methyl-2-oxobutanoate: step 1/2. In terms of biological role, catalyzes the reversible reaction in which hydroxymethyl group from 5,10-methylenetetrahydrofolate is transferred onto alpha-ketoisovalerate to form ketopantoate. The protein is 3-methyl-2-oxobutanoate hydroxymethyltransferase of Anaeromyxobacter sp. (strain K).